The chain runs to 204 residues: Redox-sensing transcriptional repressor Rex 2 (204 aa).

The segment at residues 17–53 (MYRKVLEATKKPYISSDEIARFLEINPDLVRKDFSYL) is a DNA-binding region (H-T-H motif).

The protein belongs to the transcriptional regulatory Rex family. In terms of assembly, homodimer.

It localises to the cytoplasm. Modulates transcription in response to changes in cellular NADH/NAD(+) redox state. In Thermotoga maritima (strain ATCC 43589 / DSM 3109 / JCM 10099 / NBRC 100826 / MSB8), this protein is Redox-sensing transcriptional repressor Rex 2 (rex2).